The primary structure comprises 163 residues: ATP synthase subunit b' (163 aa).

A helical membrane pass occupies residues 28–45 (LMAIQFLLLALILNATLY).

It belongs to the ATPase B chain family. F-type ATPases have 2 components, F(1) - the catalytic core - and F(0) - the membrane proton channel. F(1) has five subunits: alpha(3), beta(3), gamma(1), delta(1), epsilon(1). F(0) has four main subunits: a(1), b(1), b'(1) and c(10-14). The alpha and beta chains form an alternating ring which encloses part of the gamma chain. F(1) is attached to F(0) by a central stalk formed by the gamma and epsilon chains, while a peripheral stalk is formed by the delta, b and b' chains.

It localises to the cellular thylakoid membrane. Its function is as follows. F(1)F(0) ATP synthase produces ATP from ADP in the presence of a proton or sodium gradient. F-type ATPases consist of two structural domains, F(1) containing the extramembraneous catalytic core and F(0) containing the membrane proton channel, linked together by a central stalk and a peripheral stalk. During catalysis, ATP synthesis in the catalytic domain of F(1) is coupled via a rotary mechanism of the central stalk subunits to proton translocation. Functionally, component of the F(0) channel, it forms part of the peripheral stalk, linking F(1) to F(0). The b'-subunit is a diverged and duplicated form of b found in plants and photosynthetic bacteria. The sequence is that of ATP synthase subunit b' from Nostoc sp. (strain PCC 7120 / SAG 25.82 / UTEX 2576).